Consider the following 125-residue polypeptide: uncharacterized protein (125 aa).

It localises to the plastid. This is an uncharacterized protein from Euglena longa (Euglenophycean alga).